Here is a 184-residue protein sequence, read N- to C-terminus: UPF0316 protein BPUM_0594 (184 aa).

3 helical membrane-spanning segments follow: residues 9–29 (AFTM…FSTM), 41–61 (AAAF…SIVL), and 67–87 (IQNV…GMKI).

It belongs to the UPF0316 family.

It is found in the cell membrane. The protein is UPF0316 protein BPUM_0594 of Bacillus pumilus (strain SAFR-032).